Here is a 179-residue protein sequence, read N- to C-terminus: Large ribosomal subunit protein uL5 (179 aa).

The protein belongs to the universal ribosomal protein uL5 family. In terms of assembly, part of the 50S ribosomal subunit; part of the 5S rRNA/L5/L18/L25 subcomplex. Contacts the 5S rRNA and the P site tRNA. Forms a bridge to the 30S subunit in the 70S ribosome.

Functionally, this is one of the proteins that bind and probably mediate the attachment of the 5S RNA into the large ribosomal subunit, where it forms part of the central protuberance. In the 70S ribosome it contacts protein S13 of the 30S subunit (bridge B1b), connecting the 2 subunits; this bridge is implicated in subunit movement. Contacts the P site tRNA; the 5S rRNA and some of its associated proteins might help stabilize positioning of ribosome-bound tRNAs. In Staphylococcus epidermidis (strain ATCC 35984 / DSM 28319 / BCRC 17069 / CCUG 31568 / BM 3577 / RP62A), this protein is Large ribosomal subunit protein uL5.